The primary structure comprises 856 residues: Cyclic di-GMP phosphodiesterase PdeB (856 aa).

A run of 2 helical transmembrane segments spans residues 7–27 and 230–250; these read ILVF…YCLG and WVSL…YVWL. The region spanning 303 to 350 is the PAS domain; it reads QKERGKITLESIAEAVILTDIEAKVIYMNPKAETLLEVASSNAVGESL. The GGDEF domain maps to 454-587; it reads RSLAVCYLDL…GTNQIHIYDD (134 aa). Residues 598–852 enclose the EAL domain; the sequence is APKWAVRIAQ…SYCEQFETRL (255 aa).

It is found in the cell membrane. The enzyme catalyses 3',3'-c-di-GMP + H2O = 5'-phosphoguanylyl(3'-&gt;5')guanosine + H(+). Its function is as follows. Affects motility and biofilm formation, and is linked to the regulation of sulfate uptake and assimilation. This Shewanella oneidensis (strain ATCC 700550 / JCM 31522 / CIP 106686 / LMG 19005 / NCIMB 14063 / MR-1) protein is Cyclic di-GMP phosphodiesterase PdeB (pdeB).